A 794-amino-acid polypeptide reads, in one-letter code: Cadherin-12 (794 aa).

Positions 1–23 (MLTRNCLSLLLWVLFDGGLLTPL) are cleaved as a signal peptide. The propeptide occupies 24–54 (QPQPQQTLATEPRENVIHLPGQRSHFQRVKR). 5 Cadherin domains span residues 55–160 (GWVW…EPKF), 161–269 (LDGP…PPRF), 270–384 (PKSI…PPVF), 385–487 (SKPL…EFPP), and 488–609 (EISV…IFLP). Topologically, residues 55 to 609 (GWVWNQFFVL…SCNVEAIFLP (555 aa)) are extracellular. N-linked (GlcNAc...) asparagine glycosylation occurs at asparagine 256. Asparagine 456, asparagine 537, and asparagine 545 each carry an N-linked (GlcNAc...) asparagine glycan. A helical membrane pass occupies residues 610 to 637 (VGLSTGALIAILLCIVILLAIVVLYVAL). The Cytoplasmic portion of the chain corresponds to 638–794 (RRQKKKDTLM…EESYNPDKVT (157 aa)). Serine 787 bears the Phosphoserine mark.

As to expression, brain.

It localises to the cell membrane. Its function is as follows. Cadherins are calcium-dependent cell adhesion proteins. They preferentially interact with themselves in a homophilic manner in connecting cells; cadherins may thus contribute to the sorting of heterogeneous cell types. In Homo sapiens (Human), this protein is Cadherin-12 (CDH12).